A 146-amino-acid chain; its full sequence is Large ribosomal subunit protein uL15 (146 aa).

The segment at 1 to 56 (MKLHELRAAEGANKASKRVGRGTGSGLGKTSGRGQNGQNSRSGGGVRPGFEGGQMP) is disordered. Composition is skewed to gly residues over residues 21–35 (RGTG…GRGQ) and 42–52 (SGGGVRPGFEG).

This sequence belongs to the universal ribosomal protein uL15 family. As to quaternary structure, part of the 50S ribosomal subunit.

Its function is as follows. Binds to the 23S rRNA. This is Large ribosomal subunit protein uL15 from Clostridium botulinum (strain Okra / Type B1).